We begin with the raw amino-acid sequence, 359 residues long: tRNA-specific 2-thiouridylase MnmA (359 aa).

ATP-binding positions include 9 to 16 and Met-35; that span reads GMSGGVDS. Cys-104 functions as the Nucleophile in the catalytic mechanism. Cys-104 and Cys-200 form a disulfide bridge. Gly-128 provides a ligand contact to ATP. Positions 150 to 152 are interaction with tRNA; it reads KDQ. The active-site Cysteine persulfide intermediate is the Cys-200. The segment at 306-307 is interaction with tRNA; sequence RY.

It belongs to the MnmA/TRMU family.

The protein resides in the cytoplasm. It carries out the reaction S-sulfanyl-L-cysteinyl-[protein] + uridine(34) in tRNA + AH2 + ATP = 2-thiouridine(34) in tRNA + L-cysteinyl-[protein] + A + AMP + diphosphate + H(+). Functionally, catalyzes the 2-thiolation of uridine at the wobble position (U34) of tRNA, leading to the formation of s(2)U34. In Clostridium perfringens (strain ATCC 13124 / DSM 756 / JCM 1290 / NCIMB 6125 / NCTC 8237 / Type A), this protein is tRNA-specific 2-thiouridylase MnmA.